Reading from the N-terminus, the 64-residue chain is Large ribosomal subunit protein bL28 (64 aa).

Belongs to the bacterial ribosomal protein bL28 family.

This Mycoplasmoides gallisepticum (strain R(low / passage 15 / clone 2)) (Mycoplasma gallisepticum) protein is Large ribosomal subunit protein bL28.